The sequence spans 399 residues: Succinate--CoA ligase [ADP-forming] subunit beta (399 aa).

The region spanning 9–254 (KAVLQPFGVS…TTEEDAKEIE (246 aa)) is the ATP-grasp domain. ATP is bound by residues K46, 53–55 (GRG), E109, S112, and E117. Mg(2+) contacts are provided by N209 and D223. Residues N274 and 331 to 333 (GIM) each bind substrate.

The protein belongs to the succinate/malate CoA ligase beta subunit family. In terms of assembly, heterotetramer of two alpha and two beta subunits. Mg(2+) serves as cofactor.

It carries out the reaction succinate + ATP + CoA = succinyl-CoA + ADP + phosphate. It catalyses the reaction GTP + succinate + CoA = succinyl-CoA + GDP + phosphate. The protein operates within carbohydrate metabolism; tricarboxylic acid cycle; succinate from succinyl-CoA (ligase route): step 1/1. Its function is as follows. Succinyl-CoA synthetase functions in the citric acid cycle (TCA), coupling the hydrolysis of succinyl-CoA to the synthesis of either ATP or GTP and thus represents the only step of substrate-level phosphorylation in the TCA. The beta subunit provides nucleotide specificity of the enzyme and binds the substrate succinate, while the binding sites for coenzyme A and phosphate are found in the alpha subunit. This Rhodopseudomonas palustris (strain BisA53) protein is Succinate--CoA ligase [ADP-forming] subunit beta.